The chain runs to 128 residues: Sulfurtransferase TusD (128 aa).

The Cysteine persulfide intermediate role is filled by Cys-78.

It belongs to the DsrE/TusD family. As to quaternary structure, heterohexamer, formed by a dimer of trimers. The hexameric TusBCD complex contains 2 copies each of TusB, TusC and TusD. The TusBCD complex interacts with TusE.

The protein localises to the cytoplasm. Part of a sulfur-relay system required for 2-thiolation of 5-methylaminomethyl-2-thiouridine (mnm(5)s(2)U) at tRNA wobble positions. Accepts sulfur from TusA and transfers it in turn to TusE. The protein is Sulfurtransferase TusD of Escherichia coli (strain 55989 / EAEC).